A 112-amino-acid polypeptide reads, in one-letter code: ATP synthase subunit c (112 aa).

A run of 2 helical transmembrane segments spans residues 36-56 and 81-101; these read FSVL…AIGM and MFIA…IALI.

Belongs to the ATPase C chain family. As to quaternary structure, F-type ATPases have 2 components, F(1) - the catalytic core - and F(0) - the membrane proton channel. F(1) has five subunits: alpha(3), beta(3), gamma(1), delta(1), epsilon(1). F(0) has three main subunits: a(1), b(2) and c(10-14). The alpha and beta chains form an alternating ring which encloses part of the gamma chain. F(1) is attached to F(0) by a central stalk formed by the gamma and epsilon chains, while a peripheral stalk is formed by the delta and b chains.

It is found in the cell inner membrane. In terms of biological role, f(1)F(0) ATP synthase produces ATP from ADP in the presence of a proton or sodium gradient. F-type ATPases consist of two structural domains, F(1) containing the extramembraneous catalytic core and F(0) containing the membrane proton channel, linked together by a central stalk and a peripheral stalk. During catalysis, ATP synthesis in the catalytic domain of F(1) is coupled via a rotary mechanism of the central stalk subunits to proton translocation. Key component of the F(0) channel; it plays a direct role in translocation across the membrane. A homomeric c-ring of between 10-14 subunits forms the central stalk rotor element with the F(1) delta and epsilon subunits. The chain is ATP synthase subunit c from Campylobacter jejuni subsp. doylei (strain ATCC BAA-1458 / RM4099 / 269.97).